A 270-amino-acid chain; its full sequence is Probable 6-oxopurine nucleoside phosphorylase (270 aa).

Residues Ser-10 and 48–49 (RH) contribute to the phosphate site. Met-191 contributes to the substrate binding site. Residue Thr-192 coordinates phosphate. Substrate is bound at residue 215–217 (NYA).

It belongs to the PNP/MTAP phosphorylase family. MTAP subfamily. Homohexamer. Dimer of a homotrimer.

It catalyses the reaction a purine D-ribonucleoside + phosphate = a purine nucleobase + alpha-D-ribose 1-phosphate. It participates in purine metabolism; purine nucleoside salvage. In terms of biological role, purine nucleoside phosphorylase which is highly specific for 6-oxopurine nucleosides. Cleaves guanosine or inosine to respective bases and sugar-1-phosphate molecules. Involved in purine salvage. The polypeptide is Probable 6-oxopurine nucleoside phosphorylase (Korarchaeum cryptofilum (strain OPF8)).